Consider the following 278-residue polypeptide: Glutamate racemase (278 aa).

Residues 25–26 and 57–58 contribute to the substrate site; these read DS and YG. Catalysis depends on Cys89, which acts as the Proton donor/acceptor. 90–91 contacts substrate; the sequence is NT. The active-site Proton donor/acceptor is Cys204. 205-206 contributes to the substrate binding site; that stretch reads TH.

Belongs to the aspartate/glutamate racemases family.

It carries out the reaction L-glutamate = D-glutamate. It participates in cell wall biogenesis; peptidoglycan biosynthesis. Its function is as follows. Provides the (R)-glutamate required for cell wall biosynthesis. This Brucella anthropi (strain ATCC 49188 / DSM 6882 / CCUG 24695 / JCM 21032 / LMG 3331 / NBRC 15819 / NCTC 12168 / Alc 37) (Ochrobactrum anthropi) protein is Glutamate racemase.